Consider the following 328-residue polypeptide: Protein chibby homolog 2 (328 aa).

Positions 180 to 231 (NKGASSVQKDTENTTAAGEGSLGPTCQEEHDAKEESTTPTQNDTKIAPSTED) are disordered. Over residues 182 to 195 (GASSVQKDTENTTA) the composition is skewed to polar residues. Over residues 206-215 (QEEHDAKEES) the composition is skewed to basic and acidic residues. Residues 259-307 (RESLHALQDESKFFQEEYKKLKLQLNNVKNTVSDITTQMEMLEKELIAI) are a coiled coil.

Belongs to the chibby family. SPERT subfamily.

The protein is Protein chibby homolog 2 (CBY2) of Gallus gallus (Chicken).